Reading from the N-terminus, the 320-residue chain is Cytochrome f (320 aa).

The N-terminal stretch at 1-35 (MNFFTHKKNNFGSFVTIFSFLVALGVTNLTPAAEA) is a signal peptide. Residues Y36, C56, C59, and H60 each contribute to the heme site. Residues 286–306 (IQGLLVFFATVLFAQVLLVLK) form a helical membrane-spanning segment.

The protein belongs to the cytochrome f family. As to quaternary structure, the 4 large subunits of the cytochrome b6-f complex are cytochrome b6, subunit IV (17 kDa polypeptide, petD), cytochrome f and the Rieske protein, while the 4 small subunits are PetG, PetL, PetM and PetN. The complex functions as a dimer. Heme is required as a cofactor.

It is found in the plastid. The protein localises to the chloroplast thylakoid membrane. In terms of biological role, component of the cytochrome b6-f complex, which mediates electron transfer between photosystem II (PSII) and photosystem I (PSI), cyclic electron flow around PSI, and state transitions. This is Cytochrome f from Tetradesmus obliquus (Green alga).